A 666-amino-acid chain; its full sequence is Protein scarlet (666 aa).

Topologically, residues 1–417 (MSDSDSKRID…TIQWLRFIQK (417 aa)) are cytoplasmic. Positions 26–55 (PVGSTIEVPSLDSTPKLSKRNSSERSLPLR) are disordered. In terms of domain architecture, ABC transporter spans 69-316 (LVWRDLCVYT…FANHGYYCPE (248 aa)). 108–115 (GSSGSGKT) serves as a coordination point for ATP. Residues 418–438 (IAMAFIIGACFAGTTEPSQLG) traverse the membrane as a helical segment. Over 439 to 444 (VQAVQG) the chain is Extracellular. A helical membrane pass occupies residues 445–465 (ALFIMISENTYHPMYSVLNLF). Residues 466–490 (PQGFPLFMRETRSGLYSTGQYYAAN) lie on the Cytoplasmic side of the membrane. A helical transmembrane segment spans residues 491–511 (ILALLPGMIIEPLIFVIICYW). At 512–518 (LTGLRST) the chain is on the extracellular side. Residues 519 to 539 (FYAFGVTAMCVVLVMNVATAC) traverse the membrane as a helical segment. The Cytoplasmic portion of the chain corresponds to 540–551 (GCFFSTAFNSVP). Residues 552–572 (LAMAYLVPLDYIFMITSGIFI) traverse the membrane as a helical segment. Residues 573-639 (QVNSLPVAFW…YSFNESNVYR (67 aa)) are Extracellular-facing. 2 N-linked (GlcNAc...) asparagine glycosylation sites follow: N607 and N633. The helical transmembrane segment at 640-660 (NLLAMVGLYFGFHLLGYYCLW) threads the bilayer. Residues 661-666 (RRARKL) are Cytoplasmic-facing.

This sequence belongs to the ABC transporter superfamily. ABCG family. Eye pigment precursor importer (TC 3.A.1.204) subfamily. As to quaternary structure, may form a heterodimer with w/white. Expressed in the eye, specifically in primary pigment cells, secondary pigment cells and retinula cells (at protein level).

The protein localises to the cytoplasmic vesicle membrane. It catalyses the reaction L-kynurenine(out) + ATP + H2O = L-kynurenine(in) + ADP + phosphate + H(+). ATP-dependent transporter of the ATP-binding cassette (ABC) family which transports various molecules including bioamines, neurotransmitters and metabolic intermediates. In the eye and probably in association with w/white, required for the transport of the eye brown pigment precursors, kynurenine and probably tryptophan, into pigment cell granules. In Malpighian tubules and pupal eyes, involved in kynurenine transport. Probably in association with w/white, plays a role in zinc storage granule biogenesis in Malpighian tubule principal epithelial cells. The chain is Protein scarlet from Drosophila melanogaster (Fruit fly).